The chain runs to 383 residues: Trichodiene synthase (383 aa).

Belongs to the trichodiene synthase family.

The catalysed reaction is (2E,6E)-farnesyl diphosphate = trichodiene + diphosphate. It functions in the pathway sesquiterpene biosynthesis; trichothecene biosynthesis. Functionally, TS is a member of the terpene cyclase group of enzymes. It catalyzes the isomerization and cyclization of farnesyl pyro-phosphate to form trichodiene, the first cyclic intermediate in the biosynthetic pathway for trichothecenes. It serves to branch trichothecene biosynthesis from the isoprenoid pathway. In Stachybotrys chartarum (Toxic black mold), this protein is Trichodiene synthase (TRI5).